A 140-amino-acid polypeptide reads, in one-letter code: Large ribosomal subunit protein bL19 (140 aa).

Basic and acidic residues predominate over residues 113 to 126; sequence RIAERQDRTADGKI. Residues 113 to 140 form a disordered region; sequence RIAERQDRTADGKIKKGGKSAPAPTAAE.

This sequence belongs to the bacterial ribosomal protein bL19 family.

Functionally, this protein is located at the 30S-50S ribosomal subunit interface and may play a role in the structure and function of the aminoacyl-tRNA binding site. This chain is Large ribosomal subunit protein bL19, found in Xanthobacter autotrophicus (strain ATCC BAA-1158 / Py2).